The sequence spans 492 residues: Probable cytochrome P450 513A3 (492 aa).

A helical membrane pass occupies residues 1–21 (MTSLTLYLIIFSIILYLFVNR). C437 lines the heme pocket.

It belongs to the cytochrome P450 family. Heme is required as a cofactor.

It is found in the membrane. The polypeptide is Probable cytochrome P450 513A3 (cyp513A3) (Dictyostelium discoideum (Social amoeba)).